We begin with the raw amino-acid sequence, 427 residues long: D-inositol 3-phosphate glycosyltransferase (427 aa).

Residue His-12 coordinates 1D-myo-inositol 3-phosphate. UDP-N-acetyl-alpha-D-glucosamine-binding positions include 18-19 (QP) and Gly-26. 1D-myo-inositol 3-phosphate contacts are provided by residues 23–28 (DAGGMN), Lys-81, Tyr-113, Thr-137, and Arg-157. Positions 234, 239, and 297 each coordinate UDP-N-acetyl-alpha-D-glucosamine. Mg(2+) contacts are provided by Tyr-306, Gln-307, and Ala-309. UDP-N-acetyl-alpha-D-glucosamine-binding residues include Glu-319 and Glu-327. Mg(2+) is bound at residue Thr-333.

This sequence belongs to the glycosyltransferase group 1 family. MshA subfamily. In terms of assembly, homodimer.

The enzyme catalyses 1D-myo-inositol 3-phosphate + UDP-N-acetyl-alpha-D-glucosamine = 1D-myo-inositol 2-acetamido-2-deoxy-alpha-D-glucopyranoside 3-phosphate + UDP + H(+). Its function is as follows. Catalyzes the transfer of a N-acetyl-glucosamine moiety to 1D-myo-inositol 3-phosphate to produce 1D-myo-inositol 2-acetamido-2-deoxy-glucopyranoside 3-phosphate in the mycothiol biosynthesis pathway. This Corynebacterium diphtheriae (strain ATCC 700971 / NCTC 13129 / Biotype gravis) protein is D-inositol 3-phosphate glycosyltransferase.